Consider the following 204-residue polypeptide: GTP cyclohydrolase 1 (204 aa).

The Zn(2+) site is built by Cys92, His95, and Cys165.

This sequence belongs to the GTP cyclohydrolase I family. Homomer.

The catalysed reaction is GTP + H2O = 7,8-dihydroneopterin 3'-triphosphate + formate + H(+). It participates in cofactor biosynthesis; 7,8-dihydroneopterin triphosphate biosynthesis; 7,8-dihydroneopterin triphosphate from GTP: step 1/1. This Mycobacteroides abscessus (strain ATCC 19977 / DSM 44196 / CCUG 20993 / CIP 104536 / JCM 13569 / NCTC 13031 / TMC 1543 / L948) (Mycobacterium abscessus) protein is GTP cyclohydrolase 1.